We begin with the raw amino-acid sequence, 314 residues long: Putative SET domain-containing protein L222 (314 aa).

The 150-residue stretch at 23–172 folds into the SET domain; the sequence is EYIQVIYQNP…ANTEITISYG (150 aa).

This sequence belongs to the class V-like SAM-binding methyltransferase superfamily.

This Acanthamoeba polyphaga mimivirus (APMV) protein is Putative SET domain-containing protein L222.